The sequence spans 108 residues: Long neurotoxin 43 (108 aa).

Residues 1–21 (MKTLLLTLVVVTIVCLDLAYT) form the signal peptide. Disulfide bonds link Cys24–Cys42, Cys35–Cys63, Cys48–Cys52, Cys67–Cys78, and Cys79–Cys84.

The protein belongs to the three-finger toxin family. Long-chain subfamily. Type II alpha-neurotoxin sub-subfamily. Expressed by the venom gland.

The protein localises to the secreted. In terms of biological role, binds with high affinity to muscular (alpha-1/CHRNA1) and neuronal (alpha-7/CHRNA7) nicotinic acetylcholine receptor (nAChR) and inhibits acetylcholine from binding to the receptor, thereby impairing neuromuscular and neuronal transmission. The protein is Long neurotoxin 43 of Drysdalia coronoides (White-lipped snake).